A 639-amino-acid chain; its full sequence is DNA gyrase subunit B (639 aa).

A compositionally biased stretch (basic and acidic residues) spans 392-402 (QAEELTRRKSA). Residues 392 to 417 (QAEELTRRKSALESTSLPGKLADCQS) form a disordered region. The Toprim domain occupies 423–537 (SELFIVEGDS…AGYVYAAQPP (115 aa)). Mg(2+) contacts are provided by E429, D502, and D504.

The protein belongs to the type II topoisomerase GyrB family. As to quaternary structure, heterotetramer, composed of two GyrA and two GyrB chains. In the heterotetramer, GyrA contains the active site tyrosine that forms a transient covalent intermediate with DNA, while GyrB binds cofactors and catalyzes ATP hydrolysis. Mg(2+) serves as cofactor. It depends on Mn(2+) as a cofactor. Ca(2+) is required as a cofactor.

Its subcellular location is the cytoplasm. It carries out the reaction ATP-dependent breakage, passage and rejoining of double-stranded DNA.. A type II topoisomerase that negatively supercoils closed circular double-stranded (ds) DNA in an ATP-dependent manner to modulate DNA topology and maintain chromosomes in an underwound state. Negative supercoiling favors strand separation, and DNA replication, transcription, recombination and repair, all of which involve strand separation. Also able to catalyze the interconversion of other topological isomers of dsDNA rings, including catenanes and knotted rings. Type II topoisomerases break and join 2 DNA strands simultaneously in an ATP-dependent manner. In Haloferax lucentense (strain DSM 14919 / JCM 9276 / NCIMB 13854 / Aa 2.2) (Haloferax alicantei), this protein is DNA gyrase subunit B.